The chain runs to 740 residues: Ion-translocating oxidoreductase complex subunit C (740 aa).

2 4Fe-4S ferredoxin-type domains span residues 369-397 (GEPQ…QQLY) and 407-436 (KATT…VQYF). Cys-377, Cys-380, Cys-383, Cys-387, Cys-416, Cys-419, Cys-422, and Cys-426 together coordinate [4Fe-4S] cluster. Disordered regions lie at residues 602–621 (KLEQ…PRKA) and 660–718 (ARAK…RKAA). Positions 611 to 621 (KPEEQVDPRKA) are enriched in basic and acidic residues.

This sequence belongs to the 4Fe4S bacterial-type ferredoxin family. RnfC subfamily. As to quaternary structure, the complex is composed of six subunits: RsxA, RsxB, RsxC, RsxD, RsxE and RsxG. [4Fe-4S] cluster serves as cofactor.

It localises to the cell inner membrane. Part of a membrane-bound complex that couples electron transfer with translocation of ions across the membrane. Required to maintain the reduced state of SoxR. In Escherichia coli O9:H4 (strain HS), this protein is Ion-translocating oxidoreductase complex subunit C.